Reading from the N-terminus, the 323-residue chain is Estradiol 17 beta-dehydrogenase 5 (323 aa).

Residues 20-24 and Asp50 each bind NADP(+); that span reads GFGTY. The active-site Proton donor is the Tyr55. His117 serves as a coordination point for substrate. NADP(+)-binding positions include 166–167, Gln190, 216–221, and 270–280; these read SN, YSALGS, and KSFSEKRIKEN.

The protein belongs to the aldo/keto reductase family. Monomer. In terms of processing, three forms are detected, probably due to post-translational modifications. Mainly found in liver. Also expressed weakly in kidney.

In terms of biological role, active toward androgens, estrogens, and xenobiotic substrates. Also exhibits low 20 alpha-HSD activity. Shows a-stereospecificity in hydrogen transfer between cofactors and substrates (A-specific). Preferentially catalyzes the reduction of 4-androstenedione, 5-alpha-androstane-3,17-dione, androsterone and dehydroepiandrosterone to testosterone, dihydrotestosterone, 5-alpha-androstane-3-alpha,17-beta-diol and 5-androstene-3-beta,17-beta-diol, respectively. This Mus musculus (Mouse) protein is Estradiol 17 beta-dehydrogenase 5 (Akr1c6).